Consider the following 275-residue polypeptide: Ribosomal RNA small subunit methyltransferase A (275 aa).

Residues Asn28, Leu30, Gly55, Glu77, Asp103, and Asn123 each contribute to the S-adenosyl-L-methionine site.

The protein belongs to the class I-like SAM-binding methyltransferase superfamily. rRNA adenine N(6)-methyltransferase family. RsmA subfamily.

Its subcellular location is the cytoplasm. It catalyses the reaction adenosine(1518)/adenosine(1519) in 16S rRNA + 4 S-adenosyl-L-methionine = N(6)-dimethyladenosine(1518)/N(6)-dimethyladenosine(1519) in 16S rRNA + 4 S-adenosyl-L-homocysteine + 4 H(+). Functionally, specifically dimethylates two adjacent adenosines (A1518 and A1519) in the loop of a conserved hairpin near the 3'-end of 16S rRNA in the 30S particle. May play a critical role in biogenesis of 30S subunits. The chain is Ribosomal RNA small subunit methyltransferase A from Allorhizobium ampelinum (strain ATCC BAA-846 / DSM 112012 / S4) (Agrobacterium vitis (strain S4)).